Consider the following 777-residue polypeptide: B3 domain-containing protein REM-like 1 (777 aa).

Residues 97–193 constitute a DNA-binding region (TF-B3 1); that stretch reads FVTFTLAPVD…TPVLSLCFEE (97 aa). 2 disordered regions span residues 200–248 and 344–391; these read VGEE…TSPS and KSSS…ESSS. Positions 218–243 are enriched in basic and acidic residues; that stretch reads KIVKDDNNKDESSTWKREGNHLRCKD. The TF-B3 2 DNA-binding region spans 252–347; sequence TLTVTITPDS…TPVLSIKSSS (96 aa). Positions 344–368 are enriched in polar residues; sequence KSSSGKGQSEFSKESLSIKPSSGNM. A compositionally biased stretch (basic and acidic residues) spans 370–388; it reads KKVENNREASRKYPPRSRE. DNA-binding regions (TF-B3) lie at residues 582-676 and 683-777; these read FLTL…RDSS and FLTL…FYTK.

It is found in the nucleus. In Arabidopsis thaliana (Mouse-ear cress), this protein is B3 domain-containing protein REM-like 1.